The following is a 201-amino-acid chain: uncharacterized protein (201 aa).

Transmembrane regions (helical) follow at residues tyrosine 9 to alanine 29, phenylalanine 42 to valine 62, serine 86 to valine 106, and leucine 126 to methionine 146. Basic and acidic residues-rich tracts occupy residues glutamate 165–asparagine 174 and aspartate 182–glutamine 191. The tract at residues glutamate 165–leucine 201 is disordered. Over residues serine 192–leucine 201 the composition is skewed to polar residues.

The protein localises to the cell membrane. This is an uncharacterized protein from Mycoplasma genitalium (strain ATCC 33530 / DSM 19775 / NCTC 10195 / G37) (Mycoplasmoides genitalium).